Reading from the N-terminus, the 449-residue chain is Gamma-aminobutyric acid receptor subunit delta (449 aa).

An N-terminal signal peptide occupies residues 1 to 24 (MDVLGWLLLPLLLLCTQPHHGARA). At 25 to 251 (MNDIGDYVGS…QLRRNRGVYI (227 aa)) the chain is on the extracellular side. 2 N-linked (GlcNAc...) asparagine glycosylation sites follow: Asn103 and Asn106. Cys164 and Cys178 are oxidised to a cystine. Residues 252–271 (IQSYMPSVLLVAMSWVSFWI) traverse the membrane as a helical segment. Topologically, residues 272-275 (SQAA) are cytoplasmic. Residues 276-298 (VPARVSLGITTVLTMTTLMVSAR) traverse the membrane as a helical segment. Topologically, residues 299-308 (SSLPRASAIK) are extracellular. Residues 309-331 (ALDVYFWICYVFVFAALVEYAFA) form a helical membrane-spanning segment. Residues 332-423 (HFNADYRKKR…SRLKPIDADT (92 aa)) are Cytoplasmic-facing. The residue at position 390 (Ser390) is a Phosphoserine. A helical membrane pass occupies residues 424–446 (IDIYARAVFPAAFAAVNIIYWAA). Residues 447-449 (YTM) lie on the Extracellular side of the membrane.

Belongs to the ligand-gated ion channel (TC 1.A.9) family. Gamma-aminobutyric acid receptor (TC 1.A.9.5) subfamily. GABRD sub-subfamily. Heteropentamer, formed by a combination of alpha (GABRA1-6), beta (GABRB1-3), gamma (GABRG1-3), delta (GABRD), epsilon (GABRE), rho (GABRR1-3), pi (GABRP) and theta (GABRQ) chains, each subunit exhibiting distinct physiological and pharmacological properties. Found in the brain, in cerebellar granule cells. Expressed in lungs, in alveolar epithelium.

It is found in the cell membrane. The catalysed reaction is chloride(in) = chloride(out). Delta subunit of the heteropentameric ligand-gated chloride channel gated by gamma-aminobutyric acid (GABA), a major inhibitory neurotransmitter in the brain. GABA-gated chloride channels, also named GABA(A) receptors (GABAAR), consist of five subunits arranged around a central pore and contain GABA active binding site(s) located at the alpha and beta subunit interface(s). When activated by GABA, GABAARs selectively allow the flow of chloride anions across the cell membrane down their electrochemical gradient. GABAARs containing delta/GABRD subunits are predominantly expressed and located in extrasynaptic or perisynaptic positions on hippocampus and cerebellar granule cells, and contribute to the tonic GABAergic inhibition. GABAAR containing alpha-4-beta-3-delta subunits can simultaneously bind GABA and histamine where histamine binds at the interface of two neighboring beta subunits, which may be involved in the regulation of sleep and wakefulness. This Rattus norvegicus (Rat) protein is Gamma-aminobutyric acid receptor subunit delta.